The following is a 536-amino-acid chain: Nuclear hormone receptor family member nhr-7 (536 aa).

Residues 6-82 (NRICAVCGDT…VGMNPDYVRP (77 aa)) constitute a DNA-binding region (nuclear receptor). NR C4-type zinc fingers lie at residues 9–29 (CAVC…CFGC) and 46–70 (CRFE…FRKC). The region spanning 155–378 (ADRSLARKTG…PFHKILTDII (224 aa)) is the NR LBD domain. The tract at residues 427-465 (SPCQISAPPPPQQQYTDYSQMPSTSSYPANSSPFQSPYR) is disordered. The segment covering 439–465 (QQYTDYSQMPSTSSYPANSSPFQSPYR) has biased composition (polar residues).

The protein belongs to the nuclear hormone receptor family.

The protein resides in the nucleus. Its function is as follows. Orphan nuclear receptor. In Caenorhabditis elegans, this protein is Nuclear hormone receptor family member nhr-7 (nhr-7).